Consider the following 309-residue polypeptide: Flavonol sulfotransferase-like (309 aa).

59–64 (KTGTTW) is a 3'-phosphoadenylyl sulfate binding site. Histidine 119 functions as the Proton acceptor in the catalytic mechanism. 3'-phosphoadenylyl sulfate is bound by residues arginine 141, serine 149, tyrosine 207, and 274–276 (RKG).

It belongs to the sulfotransferase 1 family.

It localises to the cytoplasm. The protein is Flavonol sulfotransferase-like of Flaveria bidentis (Coastal plain yellowtops).